The primary structure comprises 312 residues: MTSIVVAALYKFVTLDDYVALREPLLQTLLDNGVKGTLLLAEEGINGTVSGSREGIDALFAWLRSDPRLADIEHKESYCDEQPFYRTKVKLKKEIVTLGVLGVDPNKQVGQYVEAKDWNALISDPEVLLIDTRNDYEVAIGTFEGAVDPKTRSFREFPEYIKAHYDPARHKKVAMFCTGGIRCEKASSYMLGAGFEEVFHLRGGILKYLEEVPQEQSLWRGDCFVFDNRVTVRHDLSEGEYDQCHACRNPVSLEDRQSEHYVPGISCPHCWDSLSEKTRAGARERQKQIELARQRNQPHPLGRDPRQSTLEN.

In terms of domain architecture, Rhodanese spans 123–217 (SDPEVLLIDT…YLEEVPQEQS (95 aa)). Catalysis depends on Cys177, which acts as the Cysteine persulfide intermediate. Positions 282–293 (ARERQKQIELAR) are enriched in basic and acidic residues. The segment at 282–312 (ARERQKQIELARQRNQPHPLGRDPRQSTLEN) is disordered.

It belongs to the TrhO family.

The catalysed reaction is uridine(34) in tRNA + AH2 + O2 = 5-hydroxyuridine(34) in tRNA + A + H2O. Its function is as follows. Catalyzes oxygen-dependent 5-hydroxyuridine (ho5U) modification at position 34 in tRNAs. This is tRNA uridine(34) hydroxylase from Pseudomonas aeruginosa (strain UCBPP-PA14).